Reading from the N-terminus, the 242-residue chain is Type III pantothenate kinase (242 aa).

Position 7–14 (7–14 (DLGNSRFK)) interacts with ATP. Residues Tyr-91 and 98–101 (GVDR) each bind substrate. Asp-100 (proton acceptor) is an active-site residue. Thr-121 is a binding site for ATP. Thr-171 lines the substrate pocket.

Belongs to the type III pantothenate kinase family. Homodimer. Requires NH4(+) as cofactor. K(+) serves as cofactor.

It is found in the cytoplasm. The catalysed reaction is (R)-pantothenate + ATP = (R)-4'-phosphopantothenate + ADP + H(+). The protein operates within cofactor biosynthesis; coenzyme A biosynthesis; CoA from (R)-pantothenate: step 1/5. Catalyzes the phosphorylation of pantothenate (Pan), the first step in CoA biosynthesis. The sequence is that of Type III pantothenate kinase from Xanthomonas axonopodis pv. citri (strain 306).